The chain runs to 608 residues: MSYSSASFRKLNNVGISQPSQTTTTTTSANQPQSQSQQQPLQQSQQQHLHMKPNPHIPHHQLPGTVGTRTSIPQPALMASNSILTLGPFKHRKDLTRESVLSTYQIMGYIAAGTYGKVYKAKLKSNKLNKTDDDSGIDGINNKDIFSESMNDLHHDNSSSIMINTTTNITINNSLPQFFAIKKFKSDNHHHHINNNNNGGNHLSKGNNSIHQDEVLHYTGISQSAIREMSLCRELNNKNITKLVDIILENKSIYMVFEFCEHDLLQIIHYQSHPDFKPIPCPTIKSLIWQILNGVTFLHKNWILHRDLKPANIMVSSQGVVKIGDLGLARKFKSPLQSLYTGDKVVVTIWYRAPELLLGTRHYTPAVDLWAVGCILAELLSLRPIFKGEEAKIDLNNKKSVPFQKNQLQKIIEILGTPTTDIWNNLNKYPEYLSFTQHFNQNYPNNLSNWFKLINGGNNQNSEKCLELLSGLLKYDPELRLTADQALLHPYFLELPKVNENAFEGLNYKYPNRKIYTDDNDIMTTAANNNNNNNNNNNNNNNNNNNNNNNNNNNSGHQLSQQQNVQIQQVHQMQQQIHSQQLQSHGANSTYKRSGIDDLPGGIRKKRG.

The tract at residues 1–72 (MSYSSASFRK…PGTVGTRTSI (72 aa)) is disordered. The span at 17 to 47 (SQPSQTTTTTTSANQPQSQSQQQPLQQSQQQ) shows a compositional bias: low complexity. Positions 49–59 (LHMKPNPHIPH) are enriched in basic residues. The 389-residue stretch at 104–492 (YQIMGYIAAG…ADQALLHPYF (389 aa)) folds into the Protein kinase domain. ATP contacts are provided by residues 110–118 (IAAGTYGKV) and K182. The active-site Proton acceptor is D307. The tract at residues 523 to 608 (MTTAANNNNN…LPGGIRKKRG (86 aa)) is disordered. The span at 528–583 (NNNNNNNNNNNNNNNNNNNNNNNNNNNSGHQLSQQQNVQIQQVHQMQQQIHSQQLQ) shows a compositional bias: low complexity.

It belongs to the protein kinase superfamily. CMGC Ser/Thr protein kinase family. CDC2/CDKX subfamily. As to quaternary structure, component of the SRB8-11 complex, a regulatory module of the Mediator complex. The cofactor is Mg(2+).

It is found in the nucleus. It catalyses the reaction L-seryl-[protein] + ATP = O-phospho-L-seryl-[protein] + ADP + H(+). The catalysed reaction is L-threonyl-[protein] + ATP = O-phospho-L-threonyl-[protein] + ADP + H(+). The enzyme catalyses [DNA-directed RNA polymerase] + ATP = phospho-[DNA-directed RNA polymerase] + ADP + H(+). Component of the SRB8-11 complex. The SRB8-11 complex is a regulatory module of the Mediator complex which is itself involved in regulation of basal and activated RNA polymerase II-dependent transcription. The SRB8-11 complex may be involved in the transcriptional repression of a subset of genes regulated by Mediator. It may inhibit the association of the Mediator complex with RNA polymerase II to form the holoenzyme complex. The SRB8-11 complex phosphorylates the C-terminal domain (CTD) of the largest subunit of RNA polymerase II. This is Serine/threonine-protein kinase SSN3 (SSN3) from Candida albicans (strain SC5314 / ATCC MYA-2876) (Yeast).